Consider the following 406-residue polypeptide: MNAPQTPNSFRTGPDERGRFGIFGGRFVAETLMPNILELERAYAEAKADPAFQGEMNAYLTHYVGRPSPLYFAERLSAHFGGAKIYFKREELNHTGSHKVNNVLGQILLARRMGKPRIIAETGAGQHGVATATLCARFGLKCVVYMGAVDVERQKPNVFRMKMLGAEVVPVQSGTRTLKDAMNEALRDWVTNVADTFYCIGTVAGPHPYPAMVRDFQSVIGRETREQMLAQEGRLPDSLVACIGGGSNAMGLFHPFLDDREIEIYGVEAAGHGVSSGLHAASLTGGKPGVLHGNRTYLLMNEDGQIADAHSISAGLDYPGIGPEHAWLHEVGRVTYLSATDSETLEAFRLCSLMEGIIPALEPAHALAKVAELAPTKPRDHLMVVNLSGRGDKDIPQVAEILGDAL.

At lysine 99 the chain carries N6-(pyridoxal phosphate)lysine.

It belongs to the TrpB family. Tetramer of two alpha and two beta chains. Requires pyridoxal 5'-phosphate as cofactor.

It catalyses the reaction (1S,2R)-1-C-(indol-3-yl)glycerol 3-phosphate + L-serine = D-glyceraldehyde 3-phosphate + L-tryptophan + H2O. Its pathway is amino-acid biosynthesis; L-tryptophan biosynthesis; L-tryptophan from chorismate: step 5/5. The beta subunit is responsible for the synthesis of L-tryptophan from indole and L-serine. The chain is Tryptophan synthase beta chain from Methylobacterium sp. (strain 4-46).